The primary structure comprises 160 residues: Serine-protein kinase RsbW (160 aa).

Belongs to the anti-sigma-factor family.

It catalyses the reaction L-seryl-[protein] + ATP = O-phospho-L-seryl-[protein] + ADP + H(+). It carries out the reaction L-threonyl-[protein] + ATP = O-phospho-L-threonyl-[protein] + ADP + H(+). In terms of biological role, negative regulator of sigma-B activity. Phosphorylates and inactivates its specific antagonist protein, RsbV. Upon phosphorylation of RsbV, RsbW is released and binds to sigma-B, thereby blocking its ability to form an RNA polymerase holoenzyme (E-sigma-B). The chain is Serine-protein kinase RsbW from Bacillus cereus (strain ZK / E33L).